We begin with the raw amino-acid sequence, 321 residues long: Peroxidase 70 (321 aa).

A signal peptide spans 1–25 (MASSSFTSLSVMVLLCLAAAAVASA). Pyrrolidone carboxylic acid is present on Q26. 4 cysteine pairs are disulfide-bonded: C36-C116, C69-C74, C122-C317, and C201-C226. H67 functions as the Proton acceptor in the catalytic mechanism. Ca(2+) is bound by residues D68, V71, G73, D75, and S77. An N-linked (GlcNAc...) asparagine glycan is attached at N81. Substrate is bound at residue P164. N-linked (GlcNAc...) asparagine glycosylation occurs at N172. Position 194 (H194) interacts with heme b. T195 lines the Ca(2+) pocket. An N-linked (GlcNAc...) asparagine glycan is attached at N210. Residues D241, T244, and D249 each coordinate Ca(2+).

It belongs to the peroxidase family. Classical plant (class III) peroxidase subfamily. Requires heme b as cofactor. The cofactor is Ca(2+).

It is found in the secreted. The enzyme catalyses 2 a phenolic donor + H2O2 = 2 a phenolic radical donor + 2 H2O. Its function is as follows. Removal of H(2)O(2), oxidation of toxic reductants, biosynthesis and degradation of lignin, suberization, auxin catabolism, response to environmental stresses such as wounding, pathogen attack and oxidative stress. These functions might be dependent on each isozyme/isoform in each plant tissue. This is Peroxidase 70 (PER70) from Zea mays (Maize).